The primary structure comprises 161 residues: Phosphopantetheine adenylyltransferase (161 aa).

Position 9 (Thr-9) interacts with substrate. Residues 9–10 (TF) and His-17 contribute to the ATP site. Substrate contacts are provided by Lys-41, Leu-73, and Arg-87. ATP contacts are provided by residues 88–90 (GLR), Glu-98, and 123–129 (YQFISGT).

Belongs to the bacterial CoaD family. In terms of assembly, homohexamer. Requires Mg(2+) as cofactor.

The protein resides in the cytoplasm. The enzyme catalyses (R)-4'-phosphopantetheine + ATP + H(+) = 3'-dephospho-CoA + diphosphate. The protein operates within cofactor biosynthesis; coenzyme A biosynthesis; CoA from (R)-pantothenate: step 4/5. In terms of biological role, reversibly transfers an adenylyl group from ATP to 4'-phosphopantetheine, yielding dephospho-CoA (dPCoA) and pyrophosphate. This Cupriavidus taiwanensis (strain DSM 17343 / BCRC 17206 / CCUG 44338 / CIP 107171 / LMG 19424 / R1) (Ralstonia taiwanensis (strain LMG 19424)) protein is Phosphopantetheine adenylyltransferase.